Here is a 461-residue protein sequence, read N- to C-terminus: Ribosomal protein uS12 methylthiotransferase RimO (461 aa).

The 116-residue stretch at 13–128 (PKVGFVSLGC…VMQHVHMHLP (116 aa)) folds into the MTTase N-terminal domain. Positions 22, 58, 87, 159, 163, and 166 each coordinate [4Fe-4S] cluster. One can recognise a Radical SAM core domain in the interval 145 to 390 (LTPRHYAYLK…MEVAEEVSAK (246 aa)). In terms of domain architecture, TRAM spans 393 to 461 (AKKVGKTLKV…ADGHDLWGEV (69 aa)).

It belongs to the methylthiotransferase family. RimO subfamily. Requires [4Fe-4S] cluster as cofactor.

The protein localises to the cytoplasm. It carries out the reaction L-aspartate(89)-[ribosomal protein uS12]-hydrogen + (sulfur carrier)-SH + AH2 + 2 S-adenosyl-L-methionine = 3-methylsulfanyl-L-aspartate(89)-[ribosomal protein uS12]-hydrogen + (sulfur carrier)-H + 5'-deoxyadenosine + L-methionine + A + S-adenosyl-L-homocysteine + 2 H(+). Functionally, catalyzes the methylthiolation of an aspartic acid residue of ribosomal protein uS12. The chain is Ribosomal protein uS12 methylthiotransferase RimO from Paraburkholderia xenovorans (strain LB400).